A 591-amino-acid chain; its full sequence is V-type ATP synthase alpha chain (591 aa).

Residue 232-239 (GPFGAGKT) coordinates ATP.

The protein belongs to the ATPase alpha/beta chains family.

The enzyme catalyses ATP + H2O + 4 H(+)(in) = ADP + phosphate + 5 H(+)(out). Functionally, produces ATP from ADP in the presence of a proton gradient across the membrane. The V-type alpha chain is a catalytic subunit. The polypeptide is V-type ATP synthase alpha chain (Nitrosococcus oceani (strain ATCC 19707 / BCRC 17464 / JCM 30415 / NCIMB 11848 / C-107)).